A 264-amino-acid polypeptide reads, in one-letter code: Thymidylate synthase (264 aa).

DUMP is bound at residue Arg-21. Residue His-51 participates in (6R)-5,10-methylene-5,6,7,8-tetrahydrofolate binding. A dUMP-binding site is contributed by 126 to 127; it reads RR. Residue Cys-146 is the Nucleophile of the active site. Residues 166–169, Asn-177, and 207–209 each bind dUMP; these read RSAD and HLY. A (6R)-5,10-methylene-5,6,7,8-tetrahydrofolate-binding site is contributed by Asp-169. Ala-263 lines the (6R)-5,10-methylene-5,6,7,8-tetrahydrofolate pocket.

This sequence belongs to the thymidylate synthase family. Bacterial-type ThyA subfamily. As to quaternary structure, homodimer.

It is found in the cytoplasm. The catalysed reaction is dUMP + (6R)-5,10-methylene-5,6,7,8-tetrahydrofolate = 7,8-dihydrofolate + dTMP. It functions in the pathway pyrimidine metabolism; dTTP biosynthesis. In terms of biological role, catalyzes the reductive methylation of 2'-deoxyuridine-5'-monophosphate (dUMP) to 2'-deoxythymidine-5'-monophosphate (dTMP) while utilizing 5,10-methylenetetrahydrofolate (mTHF) as the methyl donor and reductant in the reaction, yielding dihydrofolate (DHF) as a by-product. This enzymatic reaction provides an intracellular de novo source of dTMP, an essential precursor for DNA biosynthesis. This Rhizobium johnstonii (strain DSM 114642 / LMG 32736 / 3841) (Rhizobium leguminosarum bv. viciae) protein is Thymidylate synthase.